A 428-amino-acid chain; its full sequence is Serine--tRNA ligase (428 aa).

Residue Thr-235–Glu-237 participates in L-serine binding. Residue Arg-266–Glu-268 coordinates ATP. Glu-289 is a binding site for L-serine. Residue Glu-353–Ser-356 coordinates ATP. Ser-389 contributes to the L-serine binding site.

It belongs to the class-II aminoacyl-tRNA synthetase family. Type-1 seryl-tRNA synthetase subfamily. In terms of assembly, homodimer. The tRNA molecule binds across the dimer.

The protein localises to the cytoplasm. It carries out the reaction tRNA(Ser) + L-serine + ATP = L-seryl-tRNA(Ser) + AMP + diphosphate + H(+). It catalyses the reaction tRNA(Sec) + L-serine + ATP = L-seryl-tRNA(Sec) + AMP + diphosphate + H(+). Its pathway is aminoacyl-tRNA biosynthesis; selenocysteinyl-tRNA(Sec) biosynthesis; L-seryl-tRNA(Sec) from L-serine and tRNA(Sec): step 1/1. In terms of biological role, catalyzes the attachment of serine to tRNA(Ser). Is also able to aminoacylate tRNA(Sec) with serine, to form the misacylated tRNA L-seryl-tRNA(Sec), which will be further converted into selenocysteinyl-tRNA(Sec). This is Serine--tRNA ligase from Shewanella baltica (strain OS223).